Here is a 352-residue protein sequence, read N- to C-terminus: Protein Wnt-3a (352 aa).

Residues 1-18 (MAPLGYFLLLCSLKQALG) form the signal peptide. 11 cysteine pairs are disulfide-bonded: Cys77–Cys88, Cys128–Cys136, Cys138–Cys155, Cys203–Cys217, Cys205–Cys212, Cys281–Cys312, Cys297–Cys307, Cys311–Cys351, Cys327–Cys342, Cys329–Cys339, and Cys334–Cys335. A glycan (N-linked (GlcNAc...) asparagine) is linked at Asn87. Residue Ser209 is the site of O-palmitoleoyl serine; by PORCN attachment. The N-linked (GlcNAc...) asparagine glycan is linked to Asn298.

It belongs to the Wnt family. In terms of assembly, forms a soluble 1:1 complex with AFM; this prevents oligomerization and is required for prolonged biological activity. The complex with AFM may represent the physiological form in body fluids. Homooligomer; disulfide-linked, leading to inactivation. Interacts with PORCN. Interacts with APCDD1 and WLS. Component of the Wnt-Fzd-LRP5-LRP6 signaling complex that contains a WNT protein, a FZD protein and LRP5 or LRP6. Interacts directly in the complex with LRP6. Interacts with glypican GPC3. Interacts with PKD1 (via extracellular domain). Interacts with FZD5. In terms of processing, palmitoleoylation by PORCN is required for efficient binding to frizzled receptors. Palmitoleoylation is required for proper trafficking to cell surface, vacuolar acidification is critical to release palmitoleoylated WNT3A from WLS in secretory vesicles. Depalmitoleoylated by NOTUM, leading to inhibit Wnt signaling pathway, possibly by promoting disulfide bond formation and oligomerization. Post-translationally, proteolytic processing by TIKI1 and TIKI2 promotes oxidation and formation of large disulfide-bond oligomers, leading to inactivation of WNT3A. Disulfide bonds have critical and distinct roles in secretion and activity. Loss of each conserved cysteine in WNT3A results in high molecular weight oxidized Wnt oligomers, which are formed through inter-Wnt disulfide bonding. In terms of tissue distribution, moderately expressed in placenta and at low levels in adult lung, spleen, and prostate.

It localises to the secreted. The protein resides in the extracellular space. Its subcellular location is the extracellular matrix. Its function is as follows. Ligand for members of the frizzled family of seven transmembrane receptors. Functions in the canonical Wnt signaling pathway that results in activation of transcription factors of the TCF/LEF family. Required for normal embryonic mesoderm development and formation of caudal somites. Required for normal morphogenesis of the developing neural tube. Mediates self-renewal of the stem cells at the bottom on intestinal crypts (in vitro). This Homo sapiens (Human) protein is Protein Wnt-3a (WNT3A).